The primary structure comprises 260 residues: Aspartate/glutamate leucyltransferase (260 aa).

Residues 241–251 (DRLPEEGDRGP) are compositionally biased toward basic and acidic residues. The disordered stretch occupies residues 241–260 (DRLPEEGDRGPARFPASLTE).

The protein belongs to the R-transferase family. Bpt subfamily.

The protein resides in the cytoplasm. The enzyme catalyses N-terminal L-glutamyl-[protein] + L-leucyl-tRNA(Leu) = N-terminal L-leucyl-L-glutamyl-[protein] + tRNA(Leu) + H(+). The catalysed reaction is N-terminal L-aspartyl-[protein] + L-leucyl-tRNA(Leu) = N-terminal L-leucyl-L-aspartyl-[protein] + tRNA(Leu) + H(+). In terms of biological role, functions in the N-end rule pathway of protein degradation where it conjugates Leu from its aminoacyl-tRNA to the N-termini of proteins containing an N-terminal aspartate or glutamate. The polypeptide is Aspartate/glutamate leucyltransferase (Gluconacetobacter diazotrophicus (strain ATCC 49037 / DSM 5601 / CCUG 37298 / CIP 103539 / LMG 7603 / PAl5)).